A 620-amino-acid polypeptide reads, in one-letter code: Zinc finger protein GLIS1 (620 aa).

A disordered region spans residues 108 to 132 (PLTGDLGGPSKRARPGPASTDSHEG). A C2H2-type 1 zinc finger spans residues 195-220 (QACRWVDCCAAYEQQEELVRHIEKSH). The C2H2-type 2; atypical zinc-finger motif lies at 229-256 (FTCFWAGCVRRYKPFNARYKLLIHMRVH). C2H2-type zinc fingers lie at residues 262–286 (NKCMFEGCSKAFSRLENLKIHLRSH), 292–316 (YLCQHPGCQKAFSNSSDRAKHQRTH), and 322–346 (YACQIPGCSKRYTDPSSLRKHVKAH). A Bipartite nuclear localization signal motif is present at residues 340 to 356 (RKHVKAHSAKEQQVRKK). A disordered region spans residues 414–515 (ASGLLPPAHD…PPLPSPQGYQ (102 aa)). Low complexity predominate over residues 477–488 (SSQSHSPGGQPF). Residues 489–510 (PTLPSKPSYPPFQSPPPPPLPS) show a composition bias toward pro residues.

This sequence belongs to the GLI C2H2-type zinc-finger protein family. Interacts with KLF4. Interacts with POU5F1 and/or POU5F1B. Interacts with SOX2.

It is found in the nucleus. In terms of biological role, acts both as a repressor and an activator of transcription. Binds to the consensus sequence 5'-GACCACCCAC-3'. By controlling the expression of genes involved in cell differentiation inhibits the lineage commitment of multipotent cells. Prevents, for instance, the differentiation of multipotent mesenchymal cells into adipocyte and osteoblast. This Homo sapiens (Human) protein is Zinc finger protein GLIS1.